The primary structure comprises 198 residues: Large ribosomal subunit protein uL5 (198 aa).

Belongs to the universal ribosomal protein uL5 family. As to quaternary structure, part of the 50S ribosomal subunit; part of the 5S rRNA/L5/L18/L25 subcomplex. Contacts the 5S rRNA and the P site tRNA. Forms a bridge to the 30S subunit in the 70S ribosome.

In terms of biological role, this is one of the proteins that bind and probably mediate the attachment of the 5S RNA into the large ribosomal subunit, where it forms part of the central protuberance. In the 70S ribosome it contacts protein S13 of the 30S subunit (bridge B1b), connecting the 2 subunits; this bridge is implicated in subunit movement. Contacts the P site tRNA; the 5S rRNA and some of its associated proteins might help stabilize positioning of ribosome-bound tRNAs. The protein is Large ribosomal subunit protein uL5 of Chlorobium phaeovibrioides (strain DSM 265 / 1930) (Prosthecochloris vibrioformis (strain DSM 265)).